The following is a 260-amino-acid chain: Global transcriptional regulator CodY (260 aa).

A GAF domain region spans residues methionine 1–leucine 159. Residues alanine 207–arginine 226 constitute a DNA-binding region (H-T-H motif).

This sequence belongs to the CodY family.

It is found in the cytoplasm. Its function is as follows. DNA-binding global transcriptional regulator which is involved in the adaptive response to starvation and acts by directly or indirectly controlling the expression of numerous genes in response to nutrient availability. During rapid exponential growth, CodY is highly active and represses genes whose products allow adaptation to nutrient depletion. The chain is Global transcriptional regulator CodY from Streptococcus pyogenes serotype M1.